The following is a 70-amino-acid chain: Myotoxin (70 aa).

The first 22 residues, 1 to 22, serve as a signal peptide directing secretion; it reads MKILYLLFAFLFLAFLSEPGNA. 3 cysteine pairs are disulfide-bonded: Cys-26/Cys-58, Cys-33/Cys-52, and Cys-40/Cys-59.

It belongs to the crotamine-myotoxin family. As to quaternary structure, monomer. In terms of tissue distribution, expressed by the venom gland.

It localises to the secreted. Functionally, cationic peptide that possesses multiple functions. It acts as a cell-penetrating peptide (CPP), and as a potent voltage-gated potassium channel (Kv) inhibitor. It exhibits antimicrobial activities, hind limb paralysis, and severe muscle necrosis by a non-enzymatic mechanism. This chain is Myotoxin, found in Crotalus helleri (Southern pacific rattlesnake).